A 331-amino-acid polypeptide reads, in one-letter code: Tryptophan--tRNA ligase (331 aa).

ATP contacts are provided by residues Q10–S12 and G18–N19. Positions P11–N19 match the 'HIGH' region motif. Position 133 (D133) interacts with L-tryptophan. ATP is bound by residues G145–D147, V184, and K193–S197. Residues K193 to S197 carry the 'KMSKS' region motif.

This sequence belongs to the class-I aminoacyl-tRNA synthetase family. Homodimer.

The protein resides in the cytoplasm. The enzyme catalyses tRNA(Trp) + L-tryptophan + ATP = L-tryptophyl-tRNA(Trp) + AMP + diphosphate + H(+). Catalyzes the attachment of tryptophan to tRNA(Trp). The polypeptide is Tryptophan--tRNA ligase (Listeria monocytogenes serotype 4b (strain F2365)).